The sequence spans 95 residues: MLPGFTMIITSLLLTFFREVEHLLPECLTITNTPQRTLVLIQRFTLLQKVMTIHLLLSIGTLGSLFTLHPQLLKTNLLQKLHKELNSNLDYLISC.

The first 22 residues, 1–22 (MLPGFTMIITSLLLTFFREVEH), serve as a signal peptide directing secretion. The Extracellular segment spans residues 23–52 (LLPECLTITNTPQRTLVLIQRFTLLQKVMT). The chain crosses the membrane as a helical span at residues 53–69 (IHLLLSIGTLGSLFTLH). The Cytoplasmic portion of the chain corresponds to 70-95 (PQLLKTNLLQKLHKELNSNLDYLISC).

The protein localises to the host membrane. This is an uncharacterized protein from Acidianus bottle-shaped virus (isolate Italy/Pozzuoli) (ABV).